The sequence spans 164 residues: Peptide deformylase (164 aa).

Fe cation is bound by residues Cys87 and His129. Glu130 is a catalytic residue. Residue His133 coordinates Fe cation.

Belongs to the polypeptide deformylase family. Requires Fe(2+) as cofactor.

The enzyme catalyses N-terminal N-formyl-L-methionyl-[peptide] + H2O = N-terminal L-methionyl-[peptide] + formate. In terms of biological role, removes the formyl group from the N-terminal Met of newly synthesized proteins. Requires at least a dipeptide for an efficient rate of reaction. N-terminal L-methionine is a prerequisite for activity but the enzyme has broad specificity at other positions. The sequence is that of Peptide deformylase from Thermotoga sp. (strain RQ2).